The chain runs to 195 residues: Probable chemoreceptor glutamine deamidase CheD 2 (195 aa).

Belongs to the CheD family.

It carries out the reaction L-glutaminyl-[protein] + H2O = L-glutamyl-[protein] + NH4(+). Its function is as follows. Probably deamidates glutamine residues to glutamate on methyl-accepting chemotaxis receptors (MCPs), playing an important role in chemotaxis. The polypeptide is Probable chemoreceptor glutamine deamidase CheD 2 (Burkholderia thailandensis (strain ATCC 700388 / DSM 13276 / CCUG 48851 / CIP 106301 / E264)).